The chain runs to 274 residues: Kit ligand (274 aa).

Positions M1–T25 are cleaved as a signal peptide. The Extracellular segment spans residues K26 to Q215. 2 cysteine pairs are disulfide-bonded: C29–C114 and C68–C164. N-linked (GlcNAc...) asparagine glycans are attached at residues N90, N97, N145, and N196. Residues W216–W238 form a helical membrane-spanning segment. Residues K239–V274 are Cytoplasmic-facing.

The protein belongs to the SCF family. Homodimer, non-covalently linked. In terms of processing, a soluble form is produced by proteolytic processing of isoform 1 in the extracellular domain.

It localises to the cell membrane. It is found in the secreted. The protein resides in the cytoplasm. The protein localises to the cytoskeleton. Its subcellular location is the cell projection. It localises to the lamellipodium. It is found in the filopodium. In terms of biological role, stimulates the proliferation of mast cells. Able to augment the proliferation of both myeloid and lymphoid hematopoietic progenitors in bone marrow culture. Also mediates cell-cell adhesion. Acts synergistically with other cytokines, probably interleukins. The chain is Kit ligand (KITLG) from Felis catus (Cat).